The chain runs to 116 residues: NADPH-dependent 7-cyano-7-deazaguanine reductase (116 aa).

Cysteine 31 functions as the Thioimide intermediate in the catalytic mechanism. Aspartate 38 functions as the Proton donor in the catalytic mechanism. Substrate-binding positions include 53-55 (VEL) and 72-73 (YE).

It belongs to the GTP cyclohydrolase I family. QueF type 1 subfamily.

It localises to the cytoplasm. The catalysed reaction is 7-aminomethyl-7-carbaguanine + 2 NADP(+) = 7-cyano-7-deazaguanine + 2 NADPH + 3 H(+). It participates in tRNA modification; tRNA-queuosine biosynthesis. Catalyzes the NADPH-dependent reduction of 7-cyano-7-deazaguanine (preQ0) to 7-aminomethyl-7-deazaguanine (preQ1). The polypeptide is NADPH-dependent 7-cyano-7-deazaguanine reductase (Chloroherpeton thalassium (strain ATCC 35110 / GB-78)).